The chain runs to 177 residues: Bifunctional protein PyrR (177 aa).

The short motif at 99-111 is the PRPP-binding element; sequence VILIDDVLYTGRT.

The protein belongs to the purine/pyrimidine phosphoribosyltransferase family. PyrR subfamily. Homodimer and homohexamer; in equilibrium.

The catalysed reaction is UMP + diphosphate = 5-phospho-alpha-D-ribose 1-diphosphate + uracil. In terms of biological role, regulates transcriptional attenuation of the pyrimidine nucleotide (pyr) operon by binding in a uridine-dependent manner to specific sites on pyr mRNA. This disrupts an antiterminator hairpin in the RNA and favors formation of a downstream transcription terminator, leading to a reduced expression of downstream genes. Also displays a weak uracil phosphoribosyltransferase activity which is not physiologically significant. The polypeptide is Bifunctional protein PyrR (Pediococcus pentosaceus (strain ATCC 25745 / CCUG 21536 / LMG 10740 / 183-1w)).